The chain runs to 108 residues: Ig kappa chain V region GOM (108 aa).

The segment at 1–23 (DIVMTQTPLSLSVSPGEPASISC) is framework-1. The cysteines at positions 23 and 88 are disulfide-linked. A complementarity-determining-1 region spans residues 24 to 34 (RSSQSNLDYLN). The segment at 35–49 (WYLQKAGQSPRLLPE) is framework-2. Positions 44–66 (PRLLPEQDSQRASGVPDRFSGSG) are disordered. Residues 50–56 (QDSQRAS) form a complementarity-determining-2 region. The tract at residues 57–88 (GVPDRFSGSGSGTDFTLRIGRVEAEDAGIYYC) is framework-3. Positions 89-97 (MQRSFYPYT) are complementarity-determining-3. Residues 98–107 (FGQGTRLEVR) are framework-4.

This chain is Ig kappa chain V region GOM, found in Canis lupus familiaris (Dog).